The chain runs to 191 residues: Leucyl/phenylalanyl-tRNA--protein transferase (191 aa).

The protein belongs to the L/F-transferase family.

Its subcellular location is the cytoplasm. It catalyses the reaction N-terminal L-lysyl-[protein] + L-leucyl-tRNA(Leu) = N-terminal L-leucyl-L-lysyl-[protein] + tRNA(Leu) + H(+). The catalysed reaction is N-terminal L-arginyl-[protein] + L-leucyl-tRNA(Leu) = N-terminal L-leucyl-L-arginyl-[protein] + tRNA(Leu) + H(+). The enzyme catalyses L-phenylalanyl-tRNA(Phe) + an N-terminal L-alpha-aminoacyl-[protein] = an N-terminal L-phenylalanyl-L-alpha-aminoacyl-[protein] + tRNA(Phe). Its function is as follows. Functions in the N-end rule pathway of protein degradation where it conjugates Leu, Phe and, less efficiently, Met from aminoacyl-tRNAs to the N-termini of proteins containing an N-terminal arginine or lysine. This is Leucyl/phenylalanyl-tRNA--protein transferase from Trichormus variabilis (strain ATCC 29413 / PCC 7937) (Anabaena variabilis).